We begin with the raw amino-acid sequence, 597 residues long: Elongation factor 4 (597 aa).

The tr-type G domain occupies 2-184; that stretch reads KNIRNFSIIA…EIVAKIPAPT (183 aa). GTP contacts are provided by residues 14–19 and 131–134; these read DHGKST and NKID.

Belongs to the TRAFAC class translation factor GTPase superfamily. Classic translation factor GTPase family. LepA subfamily.

It localises to the cell inner membrane. It carries out the reaction GTP + H2O = GDP + phosphate + H(+). Functionally, required for accurate and efficient protein synthesis under certain stress conditions. May act as a fidelity factor of the translation reaction, by catalyzing a one-codon backward translocation of tRNAs on improperly translocated ribosomes. Back-translocation proceeds from a post-translocation (POST) complex to a pre-translocation (PRE) complex, thus giving elongation factor G a second chance to translocate the tRNAs correctly. Binds to ribosomes in a GTP-dependent manner. In Neisseria meningitidis serogroup B (strain ATCC BAA-335 / MC58), this protein is Elongation factor 4.